A 216-amino-acid polypeptide reads, in one-letter code: [5-(aminomethyl)furan-3-yl]methyl phosphate kinase (216 aa).

Residues 5 to 9, G39, D142, 147 to 152, and G166 contribute to the ATP site; these read KIGGS and YDKFPG.

Belongs to the MfnE family. In terms of assembly, homotrimer. Mg(2+) is required as a cofactor.

It catalyses the reaction [5-(aminomethyl)-3-furyl]methyl phosphate + ATP = [5-(aminomethyl)furan-3-yl]methyl diphosphate + ADP. It participates in cofactor biosynthesis; methanofuran biosynthesis. Its activity is regulated as follows. Inhibited by EDTA. Functionally, catalyzes the formation of 5-(aminomethyl)-3-furanmethanol diphosphate (F1-PP) from 5-(aminomethyl)-3-furanmethanol phosphate (F1-P) and ATP. In vitro, can also act as an adenylate kinase that catalyzes the transfer of a phosphoryl group from ATP to AMP, generating two molecules of ADP. The protein is [5-(aminomethyl)furan-3-yl]methyl phosphate kinase of Methanocaldococcus jannaschii (strain ATCC 43067 / DSM 2661 / JAL-1 / JCM 10045 / NBRC 100440) (Methanococcus jannaschii).